The following is a 209-amino-acid chain: Thymidylate kinase (209 aa).

Residue glycine 10 to threonine 17 participates in ATP binding.

This sequence belongs to the thymidylate kinase family.

It carries out the reaction dTMP + ATP = dTDP + ADP. Functionally, phosphorylation of dTMP to form dTDP in both de novo and salvage pathways of dTTP synthesis. The chain is Thymidylate kinase from Pediococcus pentosaceus (strain ATCC 25745 / CCUG 21536 / LMG 10740 / 183-1w).